Reading from the N-terminus, the 234-residue chain is LexA repressor (234 aa).

A DNA-binding region (H-T-H motif) is located at residues arginine 41–glutamine 61. Catalysis depends on for autocatalytic cleavage activity residues serine 152 and lysine 189.

The protein belongs to the peptidase S24 family. In terms of assembly, homodimer.

The catalysed reaction is Hydrolysis of Ala-|-Gly bond in repressor LexA.. Its function is as follows. Represses a number of genes involved in the response to DNA damage (SOS response), including recA and lexA. In the presence of single-stranded DNA, RecA interacts with LexA causing an autocatalytic cleavage which disrupts the DNA-binding part of LexA, leading to derepression of the SOS regulon and eventually DNA repair. The chain is LexA repressor from Polaromonas sp. (strain JS666 / ATCC BAA-500).